Reading from the N-terminus, the 466-residue chain is Methylenetetrahydrofolate--tRNA-(uracil-5-)-methyltransferase TrmFO (466 aa).

14–19 (GGGLAG) lines the FAD pocket.

Belongs to the MnmG family. TrmFO subfamily. Requires FAD as cofactor.

Its subcellular location is the cytoplasm. The catalysed reaction is uridine(54) in tRNA + (6R)-5,10-methylene-5,6,7,8-tetrahydrofolate + NADH + H(+) = 5-methyluridine(54) in tRNA + (6S)-5,6,7,8-tetrahydrofolate + NAD(+). It carries out the reaction uridine(54) in tRNA + (6R)-5,10-methylene-5,6,7,8-tetrahydrofolate + NADPH + H(+) = 5-methyluridine(54) in tRNA + (6S)-5,6,7,8-tetrahydrofolate + NADP(+). Functionally, catalyzes the folate-dependent formation of 5-methyl-uridine at position 54 (M-5-U54) in all tRNAs. In Brucella suis (strain ATCC 23445 / NCTC 10510), this protein is Methylenetetrahydrofolate--tRNA-(uracil-5-)-methyltransferase TrmFO.